The primary structure comprises 569 residues: MYPKEEHSAGGISSSVNYLDGAYEYPNPTQTFGTSSPAEPASVGYYPAPPDPHEEHLQTLGGGSSSPLMFAPSSPQLSPYLSHHGGHHTTPHQVSYYLDSSSSTVYRSSVVSSQQAAVGLCEELCSATDRQELYTGSRAAGGFDSGKETRFCAVCSDYASGYHYGVWSCEGCKAFFKRSIQGHNDYVCPATNQCTIDRNRRKSCQACRLRKCYEVGMMKGGIRKDRGGRSVRRERRRSSNEDRDKSSSDQCSRAGVRTTGPQDKRKKRSGGVVSTLCMSPDQVLLLLLGAEPPAVCSRQKHSRPYTEITMMSLLTNMADKELVHMIAWAKKVPGFQDLSLHDQVQLLESSWLEVLMIGLIWRSIHSPGKLIFAQDLILDRSEGECVEGMAEIFDMLLATVARFRSLKLKLEEFVCLKAIILINSGAFSFCSSPVEPLMDNFMVQCMLDNITDALIYCISKSGASLQLQSRRQAQLLLLLSHIRHMSNKGMEHLYRMKCKNRVPLYDLLLEMLDAQRFQSSGKVQRVWSQSEKNPPSTPTTSSSSSNNSPRGGAAAIQSNGACHSHSPDP.

Residues 1–151 are modulating; that stretch reads MYPKEEHSAG…GFDSGKETRF (151 aa). Positions 28–37 are enriched in polar residues; the sequence is PTQTFGTSSP. The disordered stretch occupies residues 28-65; the sequence is PTQTFGTSSPAEPASVGYYPAPPDPHEEHLQTLGGGSS. NR C4-type zinc fingers lie at residues 152–172 and 188–212; these read CAVCSDYASGYHYGVWSCEGC and CPATNQCTIDRNRRKSCQACRLRKC. Residues 152–217 constitute a DNA-binding region (nuclear receptor); sequence CAVCSDYASG…RLRKCYEVGM (66 aa). The hinge stretch occupies residues 218 to 278; it reads MKGGIRKDRG…SGGVVSTLCM (61 aa). A disordered region spans residues 223–271; it reads RKDRGGRSVRRERRRSSNEDRDKSSSDQCSRAGVRTTGPQDKRKKRSGG. A compositionally biased stretch (basic and acidic residues) spans 237–247; it reads RSSNEDRDKSS. The region spanning 279–515 is the NR LBD domain; sequence SPDQVLLLLL…DLLLEMLDAQ (237 aa). Residues 523–532 are compositionally biased toward polar residues; sequence VQRVWSQSEK. The tract at residues 523 to 569 is disordered; that stretch reads VQRVWSQSEKNPPSTPTTSSSSSNNSPRGGAAAIQSNGACHSHSPDP. Residues 538 to 549 show a composition bias toward low complexity; the sequence is PTTSSSSSNNSP.

The protein belongs to the nuclear hormone receptor family. NR3 subfamily. As to quaternary structure, binds DNA as a homodimer. Can form a heterodimer with ER-beta.

Its subcellular location is the nucleus. The steroid hormones and their receptors are involved in the regulation of eukaryotic gene expression and affect cellular proliferation and differentiation in target tissues. This chain is Estrogen receptor (esr1), found in Danio rerio (Zebrafish).